Reading from the N-terminus, the 1416-residue chain is DNA-directed RNA polymerase subunit beta' (1416 aa).

The Zn(2+) site is built by Cys-68, Cys-70, Cys-83, and Cys-86. Asp-458, Asp-460, and Asp-462 together coordinate Mg(2+). Zn(2+)-binding residues include Cys-811, Cys-884, Cys-891, and Cys-894.

It belongs to the RNA polymerase beta' chain family. The RNAP catalytic core consists of 2 alpha, 1 beta, 1 beta' and 1 omega subunit. When a sigma factor is associated with the core the holoenzyme is formed, which can initiate transcription. Mg(2+) serves as cofactor. It depends on Zn(2+) as a cofactor.

It carries out the reaction RNA(n) + a ribonucleoside 5'-triphosphate = RNA(n+1) + diphosphate. Its function is as follows. DNA-dependent RNA polymerase catalyzes the transcription of DNA into RNA using the four ribonucleoside triphosphates as substrates. The sequence is that of DNA-directed RNA polymerase subunit beta' from Francisella philomiragia subsp. philomiragia (strain ATCC 25017 / CCUG 19701 / FSC 153 / O#319-036).